Consider the following 383-residue polypeptide: NifS-like protein (383 aa).

Residues 58 to 59 and 184 to 186 contribute to the pyridoxal 5'-phosphate site; these read SE and SIN.

This sequence belongs to the class-V pyridoxal-phosphate-dependent aminotransferase family. NifS/IscS subfamily. Pyridoxal 5'-phosphate serves as cofactor.

It localises to the virion. The protein is NifS-like protein of African swine fever virus (strain Badajoz 1971 Vero-adapted) (Ba71V).